Consider the following 108-residue polypeptide: CDGSH iron-sulfur domain-containing protein 1 (108 aa).

Residues 14-31 (IAAVTFAAGTAALGYLAY) form a helical; Signal-anchor for type III membrane protein membrane-spanning segment. Topologically, residues 32-108 (KKFYAKENRT…GPLIIKKKET (77 aa)) are cytoplasmic. Lys-42 participates in a covalent cross-link: Glycyl lysine isopeptide (Lys-Gly) (interchain with G-Cter in ubiquitin). The active-site Schiff-base intermediate with pyridoxal 5'-phosphate is the Lys-55. 2 positions are modified to N6-acetyllysine; alternate: Lys-55 and Lys-68. Residues Lys-55 and Lys-68 each participate in a glycyl lysine isopeptide (Lys-Gly) (interchain with G-Cter in ubiquitin); alternate cross-link. [2Fe-2S] cluster-binding residues include Cys-72 and Cys-74. Residues Lys-78 and Lys-79 each participate in a glycyl lysine isopeptide (Lys-Gly) (interchain with G-Cter in ubiquitin) cross-link. [2Fe-2S] cluster contacts are provided by Cys-83 and His-87. Residue Lys-89 forms a Glycyl lysine isopeptide (Lys-Gly) (interchain with G-Cter in ubiquitin) linkage. Position 104 is an N6-acetyllysine; alternate (Lys-104). Lys-104 is covalently cross-linked (Glycyl lysine isopeptide (Lys-Gly) (interchain with G-Cter in ubiquitin); alternate). Glycyl lysine isopeptide (Lys-Gly) (interchain with G-Cter in ubiquitin) cross-links involve residues Lys-105 and Lys-106.

This sequence belongs to the CISD protein family. In terms of assembly, homodimer. Requires [2Fe-2S] cluster as cofactor. Pyridoxal 5'-phosphate serves as cofactor. Ubiquitinated by PRKN during mitophagy, leading to its degradation and enhancement of mitophagy. Deubiquitinated by USP30. As to expression, liver, adipose, skeletal muscle and heart (at protein level). Widely expressed. Expressed at the highest levels in the heart.

The protein resides in the mitochondrion outer membrane. It carries out the reaction L-cysteine + 2-oxoglutarate = 2-oxo-3-sulfanylpropanoate + L-glutamate. Functionally, L-cysteine transaminase that catalyzes the reversible transfer of the amino group from L-cysteine to the alpha-keto acid 2-oxoglutarate to respectively form 2-oxo-3-sulfanylpropanoate and L-glutamate. The catalytic cycle occurs in the presence of pyridoxal 5'-phosphate (PLP) cofactor that facilitates transamination by initially forming an internal aldimine with the epsilon-amino group of active site Lys-55 residue on the enzyme (PLP-enzyme aldimine), subsequently displaced by formation of an external aldimine with the substrate amino group (PLP-L-cysteine aldimine). The external aldimine is further deprotonated to form a carbanion intermediate, which in the presence of 2-oxoglutarate regenerates PLP yielding final products 2-oxo-3-sulfanylpropanoate and L-glutamate. The proton transfer in carbanion intermediate is suggested to be controlled by the active site lysine residue, whereas PLP stabilizes carbanion structure through electron delocalization, also known as the electron sink effect. Plays a key role in regulating maximal capacity for electron transport and oxidative phosphorylation. May be involved in iron-sulfur cluster shuttling and/or in redox reactions. Can transfer the [2Fe-2S] cluster to an apo-acceptor protein only when in the oxidation state, likely serving as a redox sensor that regulates mitochondrial iron-sulfur cluster assembly and iron trafficking upon oxidative stress. The sequence is that of CDGSH iron-sulfur domain-containing protein 1 (Cisd1) from Mus musculus (Mouse).